The chain runs to 120 residues: Large ribosomal subunit protein bL12 (120 aa).

The protein belongs to the bacterial ribosomal protein bL12 family. As to quaternary structure, homodimer. Part of the ribosomal stalk of the 50S ribosomal subunit. Forms a multimeric L10(L12)X complex, where L10 forms an elongated spine to which 2 to 4 L12 dimers bind in a sequential fashion. Binds GTP-bound translation factors.

Its function is as follows. Forms part of the ribosomal stalk which helps the ribosome interact with GTP-bound translation factors. Is thus essential for accurate translation. This is Large ribosomal subunit protein bL12 from Lactobacillus acidophilus (strain ATCC 700396 / NCK56 / N2 / NCFM).